A 274-amino-acid chain; its full sequence is Large ribosomal subunit protein uL2 (274 aa).

2 disordered regions span residues 30 to 54 (EKSLAFGKKSSGGRNNNGRITIRHK) and 223 to 274 (VAMN…QLKG). Over residues 36–48 (GKKSSGGRNNNGR) the composition is skewed to low complexity. Over residues 263–274 (KFSDKYIKQLKG) the composition is skewed to basic and acidic residues.

Belongs to the universal ribosomal protein uL2 family. Part of the 50S ribosomal subunit. Forms a bridge to the 30S subunit in the 70S ribosome.

One of the primary rRNA binding proteins. Required for association of the 30S and 50S subunits to form the 70S ribosome, for tRNA binding and peptide bond formation. It has been suggested to have peptidyltransferase activity; this is somewhat controversial. Makes several contacts with the 16S rRNA in the 70S ribosome. This Wolbachia sp. subsp. Brugia malayi (strain TRS) protein is Large ribosomal subunit protein uL2.